A 336-amino-acid polypeptide reads, in one-letter code: D-alanine--D-alanine ligase (336 aa).

The region spanning 124–330 (KMWFSALGIP…FTQYLSLVIN (207 aa)) is the ATP-grasp domain. 154–209 (ALEKWGSIFVKAASQGSSVGCYKVDEASKVLGVLKDAFGYAPYVIVEKTIKARELE) contributes to the ATP binding site. Mg(2+)-binding residues include D284, E297, and N299.

Belongs to the D-alanine--D-alanine ligase family. Mg(2+) serves as cofactor. The cofactor is Mn(2+).

The protein localises to the cytoplasm. It catalyses the reaction 2 D-alanine + ATP = D-alanyl-D-alanine + ADP + phosphate + H(+). Its pathway is cell wall biogenesis; peptidoglycan biosynthesis. Its function is as follows. Cell wall formation. This is D-alanine--D-alanine ligase from Shewanella oneidensis (strain ATCC 700550 / JCM 31522 / CIP 106686 / LMG 19005 / NCIMB 14063 / MR-1).